The chain runs to 194 residues: uncharacterized protein (194 aa).

A helical transmembrane segment spans residues 17–37 (DVWLYLLVFGCLSVLVLVLVH).

This sequence belongs to the IIV-6 307L family.

The protein localises to the membrane. This is an uncharacterized protein from Invertebrate iridescent virus 3 (IIV-3).